The following is a 348-amino-acid chain: Methylthioribose-1-phosphate isomerase (348 aa).

Residues Arg-48–Ala-50, Arg-90, and Gln-195 each bind substrate. Asp-236 functions as the Proton donor in the catalytic mechanism. Residue Asn-246–Lys-247 participates in substrate binding.

Belongs to the eIF-2B alpha/beta/delta subunits family. MtnA subfamily.

It carries out the reaction 5-(methylsulfanyl)-alpha-D-ribose 1-phosphate = 5-(methylsulfanyl)-D-ribulose 1-phosphate. It participates in amino-acid biosynthesis; L-methionine biosynthesis via salvage pathway; L-methionine from S-methyl-5-thio-alpha-D-ribose 1-phosphate: step 1/6. Catalyzes the interconversion of methylthioribose-1-phosphate (MTR-1-P) into methylthioribulose-1-phosphate (MTRu-1-P). This is Methylthioribose-1-phosphate isomerase from Exiguobacterium sibiricum (strain DSM 17290 / CCUG 55495 / CIP 109462 / JCM 13490 / 255-15).